A 359-amino-acid chain; its full sequence is 4-hydroxy-3-methylbut-2-en-1-yl diphosphate synthase (flavodoxin) (359 aa).

4 residues coordinate [4Fe-4S] cluster: C264, C267, C299, and E306.

It belongs to the IspG family. [4Fe-4S] cluster serves as cofactor.

It catalyses the reaction (2E)-4-hydroxy-3-methylbut-2-enyl diphosphate + oxidized [flavodoxin] + H2O + 2 H(+) = 2-C-methyl-D-erythritol 2,4-cyclic diphosphate + reduced [flavodoxin]. It functions in the pathway isoprenoid biosynthesis; isopentenyl diphosphate biosynthesis via DXP pathway; isopentenyl diphosphate from 1-deoxy-D-xylulose 5-phosphate: step 5/6. In terms of biological role, converts 2C-methyl-D-erythritol 2,4-cyclodiphosphate (ME-2,4cPP) into 1-hydroxy-2-methyl-2-(E)-butenyl 4-diphosphate. This Helicobacter pylori (strain P12) protein is 4-hydroxy-3-methylbut-2-en-1-yl diphosphate synthase (flavodoxin).